The primary structure comprises 479 residues: ATP synthase subunit beta, chloroplastic (479 aa).

156–163 (GGAGVGKT) contacts ATP.

Belongs to the ATPase alpha/beta chains family. As to quaternary structure, F-type ATPases have 2 components, CF(1) - the catalytic core - and CF(0) - the membrane proton channel. CF(1) has five subunits: alpha(3), beta(3), gamma(1), delta(1), epsilon(1). CF(0) has four main subunits: a(1), b(1), b'(1) and c(9-12).

Its subcellular location is the plastid. It localises to the chloroplast thylakoid membrane. It carries out the reaction ATP + H2O + 4 H(+)(in) = ADP + phosphate + 5 H(+)(out). Functionally, produces ATP from ADP in the presence of a proton gradient across the membrane. The catalytic sites are hosted primarily by the beta subunits. The sequence is that of ATP synthase subunit beta, chloroplastic from Trichomanes davallioides (Kilau fern).